The chain runs to 329 residues: Cytochrome f (329 aa).

The N-terminal stretch at methionine 1–alanine 44 is a signal peptide. Heme contacts are provided by tyrosine 45, cysteine 65, cysteine 68, and histidine 69. A helical membrane pass occupies residues valine 295–lysine 315.

This sequence belongs to the cytochrome f family. The 4 large subunits of the cytochrome b6-f complex are cytochrome b6, subunit IV (17 kDa polypeptide, petD), cytochrome f and the Rieske protein, while the 4 small subunits are PetG, PetL, PetM and PetN. The complex functions as a dimer. It depends on heme as a cofactor.

Its subcellular location is the plastid. It is found in the chloroplast thylakoid membrane. In terms of biological role, component of the cytochrome b6-f complex, which mediates electron transfer between photosystem II (PSII) and photosystem I (PSI), cyclic electron flow around PSI, and state transitions. The polypeptide is Cytochrome f (Tupiella akineta (Green alga)).